The primary structure comprises 110 residues: UPF0060 membrane protein Noc_2955 (110 aa).

A run of 4 helical transmembrane segments spans residues 7–27, 33–53, 63–83, and 87–107; these read VGLF…AYLW, TIWL…LLSL, AAYG…VNGI, and TWDL…MFAP.

It belongs to the UPF0060 family.

Its subcellular location is the cell inner membrane. In Nitrosococcus oceani (strain ATCC 19707 / BCRC 17464 / JCM 30415 / NCIMB 11848 / C-107), this protein is UPF0060 membrane protein Noc_2955.